A 345-amino-acid chain; its full sequence is Ribosomal RNA large subunit methyltransferase F (345 aa).

The segment covering 1–14 has biased composition (polar residues); it reads MTSKPMTRRPTANN. Disordered stretches follow at residues 1 to 35 and 225 to 258; these read MTSK…RNPH and EANS…NAAQ. The span at 229 to 239 shows a compositional bias: basic residues; that stretch reads RKQHNLQRHRG. Residues 246 to 258 show a composition bias toward polar residues; it reads ISRSSTKSGNAAQ.

This sequence belongs to the methyltransferase superfamily. METTL16/RlmF family.

It is found in the cytoplasm. The catalysed reaction is adenosine(1618) in 23S rRNA + S-adenosyl-L-methionine = N(6)-methyladenosine(1618) in 23S rRNA + S-adenosyl-L-homocysteine + H(+). Specifically methylates the adenine in position 1618 of 23S rRNA. This Psychrobacter arcticus (strain DSM 17307 / VKM B-2377 / 273-4) protein is Ribosomal RNA large subunit methyltransferase F.